Here is a 156-residue protein sequence, read N- to C-terminus: Small ribosomal subunit protein uS7 (156 aa).

It belongs to the universal ribosomal protein uS7 family. As to quaternary structure, part of the 30S ribosomal subunit. Contacts proteins S9 and S11.

Its function is as follows. One of the primary rRNA binding proteins, it binds directly to 16S rRNA where it nucleates assembly of the head domain of the 30S subunit. Is located at the subunit interface close to the decoding center, probably blocks exit of the E-site tRNA. This is Small ribosomal subunit protein uS7 from Nocardioides sp. (strain ATCC BAA-499 / JS614).